The primary structure comprises 225 residues: Lipoprotein CseA (225 aa).

An N-terminal signal peptide occupies residues 1–36 (MRGLTDGRTPRGTRRTTQAASTAVAVFVALGVSLAG). Cys37 is lipidated: N-palmitoyl cysteine. Cys37 carries the S-diacylglycerol cysteine lipid modification. 2 disordered regions span residues 40 to 77 (GGTG…APDR) and 205 to 225 (THND…EPDS). Low complexity predominate over residues 60 to 73 (SASPAPAAKASPSK).

It is found in the cell membrane. In terms of biological role, may be involved in the stabilization of the cell envelope or may interact with the sensor protein CseC to modulate its activity, in response to cell envelope stress. In Streptomyces coelicolor (strain ATCC BAA-471 / A3(2) / M145), this protein is Lipoprotein CseA (cseA).